The sequence spans 338 residues: Clathrin light chain 1 (338 aa).

The disordered stretch occupies residues 1-111 (MATFDDGDFP…NEMREEGFQR (111 aa)). 2 stretches are compositionally biased toward polar residues: residues 29–47 (SEAQQPPTQHQSGGFSSFN) and 61–73 (SSPNHDFSSPFES). Basic and acidic residues predominate over residues 102–111 (NEMREEGFQR). Residues 102–163 (NEMREEGFQR…TIETNKTDNR (62 aa)) are involved in binding clathrin heavy chain. A coiled-coil region spans residues 122–142 (LEEKEKKEKEMRNQIITEAED). Residues 192-338 (IPREVPNIEK…VTEAEGTKAE (147 aa)) are disordered. Residues 197 to 212 (PNIEKKRGKKDPDKKP) are compositionally biased toward basic and acidic residues. The span at 241–253 (NPPPHMMPPPPPA) shows a compositional bias: pro residues. Positions 254–304 (KDAKDGKDAKDGKDAKTGKDGKDAKGGKDAKDLKDGKPADPKVTEEKRPSP) are enriched in basic and acidic residues.

The protein belongs to the clathrin light chain family. Clathrin coats are formed from molecules containing 3 heavy chains and 3 light chains.

The protein localises to the cytoplasmic vesicle membrane. The protein resides in the membrane. Its subcellular location is the coated pit. Functionally, clathrin is the major protein of the polyhedral coat of coated pits and vesicles. In Arabidopsis thaliana (Mouse-ear cress), this protein is Clathrin light chain 1.